Here is a 134-residue protein sequence, read N- to C-terminus: Small ribosomal subunit protein uS8c (134 aa).

Belongs to the universal ribosomal protein uS8 family. In terms of assembly, part of the 30S ribosomal subunit.

Its subcellular location is the plastid. The protein localises to the chloroplast. Its function is as follows. One of the primary rRNA binding proteins, it binds directly to 16S rRNA central domain where it helps coordinate assembly of the platform of the 30S subunit. The chain is Small ribosomal subunit protein uS8c (rps8) from Ipomoea purpurea (Common morning glory).